The chain runs to 159 residues: Cytochrome c-type biogenesis protein CcmE (159 aa).

At 1-23 the chain is on the cytoplasmic side; the sequence is MNNSSLENSASLKVILKQRKKKR. A helical; Signal-anchor for type II membrane protein transmembrane segment spans residues 24–44; the sequence is LLIILLCCLVMAIAASLVVYA. Residues 45–159 are Periplasmic-facing; sequence MRHAVSFFRM…RLKKHYSVEK (115 aa). The heme site is built by H138 and Y142.

It belongs to the CcmE/CycJ family.

Its subcellular location is the cell inner membrane. Heme chaperone required for the biogenesis of c-type cytochromes. Transiently binds heme delivered by CcmC and transfers the heme to apo-cytochromes in a process facilitated by CcmF and CcmH. The chain is Cytochrome c-type biogenesis protein CcmE from Bartonella tribocorum (strain CIP 105476 / IBS 506).